A 92-amino-acid chain; its full sequence is N(2)-fixation sustaining protein CowN (92 aa).

Belongs to the CowN family.

Its function is as follows. Is required to sustain N(2)-dependent growth in the presence of low levels of carbon monoxide (CO). Probably acts by protecting the N(2) fixation ability of the nitrogenase complex, which is inactivated in the presence of CO. The chain is N(2)-fixation sustaining protein CowN from Rhodopseudomonas palustris (strain HaA2).